A 60-amino-acid polypeptide reads, in one-letter code: Large ribosomal subunit protein uL30 (60 aa).

It belongs to the universal ribosomal protein uL30 family. As to quaternary structure, part of the 50S ribosomal subunit.

This chain is Large ribosomal subunit protein uL30, found in Streptococcus mutans serotype c (strain ATCC 700610 / UA159).